Reading from the N-terminus, the 125-residue chain is uncharacterized protein (125 aa).

A helical membrane pass occupies residues 10 to 26; it reads IIILVCLMFLAIMVYIY.

Its subcellular location is the membrane. This is an uncharacterized protein from Rickettsia prowazekii (strain Madrid E).